The primary structure comprises 211 residues: Pyrrolidone-carboxylate peptidase 1 (211 aa).

Active-site residues include Glu79, Cys142, and His164.

It belongs to the peptidase C15 family. In terms of assembly, homotetramer.

The protein localises to the cytoplasm. The enzyme catalyses Release of an N-terminal pyroglutamyl group from a polypeptide, the second amino acid generally not being Pro.. Its function is as follows. Removes 5-oxoproline from various penultimate amino acid residues except L-proline. The sequence is that of Pyrrolidone-carboxylate peptidase 1 (pcp1) from Saccharolobus solfataricus (strain ATCC 35092 / DSM 1617 / JCM 11322 / P2) (Sulfolobus solfataricus).